We begin with the raw amino-acid sequence, 334 residues long: Holliday junction branch migration complex subunit RuvB (334 aa).

Residues 1-182 are large ATPase domain (RuvB-L); the sequence is MDDRMIDGEL…FGVLSRLEYY (182 aa). ATP contacts are provided by residues Leu-21, Arg-22, Gly-63, Lys-66, Thr-67, Thr-68, 129–131, Arg-172, Tyr-182, and Arg-219; that span reads EDF. Thr-67 contacts Mg(2+). The tract at residues 183–253 is small ATPAse domain (RuvB-S); sequence EIKDLCNIVE…STKQALEMLQ (71 aa). Residues 256-334 form a head domain (RuvB-H) region; the sequence is DAGLDHVDHK…HLGIKRTGED (79 aa). Positions 311 and 316 each coordinate DNA.

It belongs to the RuvB family. As to quaternary structure, homohexamer. Forms an RuvA(8)-RuvB(12)-Holliday junction (HJ) complex. HJ DNA is sandwiched between 2 RuvA tetramers; dsDNA enters through RuvA and exits via RuvB. An RuvB hexamer assembles on each DNA strand where it exits the tetramer. Each RuvB hexamer is contacted by two RuvA subunits (via domain III) on 2 adjacent RuvB subunits; this complex drives branch migration. In the full resolvosome a probable DNA-RuvA(4)-RuvB(12)-RuvC(2) complex forms which resolves the HJ.

Its subcellular location is the cytoplasm. The catalysed reaction is ATP + H2O = ADP + phosphate + H(+). The RuvA-RuvB-RuvC complex processes Holliday junction (HJ) DNA during genetic recombination and DNA repair, while the RuvA-RuvB complex plays an important role in the rescue of blocked DNA replication forks via replication fork reversal (RFR). RuvA specifically binds to HJ cruciform DNA, conferring on it an open structure. The RuvB hexamer acts as an ATP-dependent pump, pulling dsDNA into and through the RuvAB complex. RuvB forms 2 homohexamers on either side of HJ DNA bound by 1 or 2 RuvA tetramers; 4 subunits per hexamer contact DNA at a time. Coordinated motions by a converter formed by DNA-disengaged RuvB subunits stimulates ATP hydrolysis and nucleotide exchange. Immobilization of the converter enables RuvB to convert the ATP-contained energy into a lever motion, pulling 2 nucleotides of DNA out of the RuvA tetramer per ATP hydrolyzed, thus driving DNA branch migration. The RuvB motors rotate together with the DNA substrate, which together with the progressing nucleotide cycle form the mechanistic basis for DNA recombination by continuous HJ branch migration. Branch migration allows RuvC to scan DNA until it finds its consensus sequence, where it cleaves and resolves cruciform DNA. This Oceanobacillus iheyensis (strain DSM 14371 / CIP 107618 / JCM 11309 / KCTC 3954 / HTE831) protein is Holliday junction branch migration complex subunit RuvB.